We begin with the raw amino-acid sequence, 413 residues long: Ribosomal RNA large subunit methyltransferase G (413 aa).

The segment at 389-413 is disordered; sequence EAEVEQAFDTETPHPQSALYGKPKA.

The protein belongs to the methyltransferase superfamily. RlmG family.

It localises to the cytoplasm. It catalyses the reaction guanosine(1835) in 23S rRNA + S-adenosyl-L-methionine = N(2)-methylguanosine(1835) in 23S rRNA + S-adenosyl-L-homocysteine + H(+). Functionally, specifically methylates the guanine in position 1835 (m2G1835) of 23S rRNA. This chain is Ribosomal RNA large subunit methyltransferase G, found in Shewanella pealeana (strain ATCC 700345 / ANG-SQ1).